A 902-amino-acid polypeptide reads, in one-letter code: Aconitate hydratase A (902 aa).

3 residues coordinate [4Fe-4S] cluster: Cys441, Cys507, and Cys510.

Belongs to the aconitase/IPM isomerase family. In terms of assembly, monomer. The cofactor is [4Fe-4S] cluster.

The catalysed reaction is citrate = D-threo-isocitrate. It catalyses the reaction (2S,3R)-3-hydroxybutane-1,2,3-tricarboxylate = 2-methyl-cis-aconitate + H2O. It participates in carbohydrate metabolism; tricarboxylic acid cycle; isocitrate from oxaloacetate: step 2/2. The protein operates within organic acid metabolism; propanoate degradation. Its function is as follows. Involved in the catabolism of short chain fatty acids (SCFA) via the tricarboxylic acid (TCA)(acetyl degradation route) and probably the 2-methylcitrate cycle I (propionate degradation route). Catalyzes the reversible isomerization of citrate to isocitrate via cis-aconitate. Also able to catalyze the hydration of cis-homoaconitate to yield (R)-homocitrate, but with a lower efficiency. Could catalyze the hydration of 2-methyl-cis-aconitate to yield (2R,3S)-2-methylisocitrate. The apo form of AcnA functions as a RNA-binding regulatory protein. In Thermus thermophilus (strain ATCC 27634 / DSM 579 / HB8), this protein is Aconitate hydratase A (acoA).